A 159-amino-acid polypeptide reads, in one-letter code: 2-C-methyl-D-erythritol 2,4-cyclodiphosphate synthase (159 aa).

2 residues coordinate a divalent metal cation: D8 and H10. 4-CDP-2-C-methyl-D-erythritol 2-phosphate contacts are provided by residues 8-10 (DVH) and 34-35 (HS). H42 is a binding site for a divalent metal cation. 4-CDP-2-C-methyl-D-erythritol 2-phosphate-binding positions include 56-58 (DIG), 61-65 (FPDTD), 100-106 (AQAPRML), 132-135 (TTTE), F139, and R142.

It belongs to the IspF family. In terms of assembly, homotrimer. A divalent metal cation serves as cofactor.

It carries out the reaction 4-CDP-2-C-methyl-D-erythritol 2-phosphate = 2-C-methyl-D-erythritol 2,4-cyclic diphosphate + CMP. It participates in isoprenoid biosynthesis; isopentenyl diphosphate biosynthesis via DXP pathway; isopentenyl diphosphate from 1-deoxy-D-xylulose 5-phosphate: step 4/6. Involved in the biosynthesis of isopentenyl diphosphate (IPP) and dimethylallyl diphosphate (DMAPP), two major building blocks of isoprenoid compounds. Catalyzes the conversion of 4-diphosphocytidyl-2-C-methyl-D-erythritol 2-phosphate (CDP-ME2P) to 2-C-methyl-D-erythritol 2,4-cyclodiphosphate (ME-CPP) with a corresponding release of cytidine 5-monophosphate (CMP). This chain is 2-C-methyl-D-erythritol 2,4-cyclodiphosphate synthase, found in Escherichia coli O6:K15:H31 (strain 536 / UPEC).